Reading from the N-terminus, the 317-residue chain is Ribosomal RNA small subunit methyltransferase H (317 aa).

Residues 32-34 (GGH), aspartate 51, phenylalanine 78, aspartate 99, and glutamine 106 each bind S-adenosyl-L-methionine.

It belongs to the methyltransferase superfamily. RsmH family.

It localises to the cytoplasm. It catalyses the reaction cytidine(1402) in 16S rRNA + S-adenosyl-L-methionine = N(4)-methylcytidine(1402) in 16S rRNA + S-adenosyl-L-homocysteine + H(+). Its function is as follows. Specifically methylates the N4 position of cytidine in position 1402 (C1402) of 16S rRNA. The polypeptide is Ribosomal RNA small subunit methyltransferase H (Helicobacter hepaticus (strain ATCC 51449 / 3B1)).